The following is a 437-amino-acid chain: Vacuolar protein sorting-associated protein 4A (437 aa).

The interval 1-84 (MTTSTLQKAI…RSKEKHGKKP (84 aa)) is interaction with CHMP1B. An MIT domain is found at 2–80 (TTSTLQKAID…KDYLRSKEKH (79 aa)). N6-acetyllysine is present on K8. The disordered stretch occupies residues 75–106 (RSKEKHGKKPVKENQSEGKGSDSDSEGDNPEK). Residues 84 to 96 (PVKENQSEGKGSD) show a composition bias toward basic and acidic residues. Residues S95 and S97 each carry the phosphoserine modification. 167-174 (GPPGTGKS) is a binding site for ATP.

The protein belongs to the AAA ATPase family. In terms of assembly, proposed to be monomeric or homodimeric in nucleotide-free form and to oligomerize upon binding to ATP to form two stacked hexameric or heptameric rings with a central pore through which ESCRT-III substrates are translocated in an ATP-dependent manner. Interacts with CHMP1A, CHMP1B, CHMP2A, CHMP2B, CHMP3, CHMP4A, CHMP4B, CHMP4C and CHMP6. Interacts with VPS4B; the interaction suggests a heteromeric assembly with VPS4B. Interacts with SPAST. Interacts with IST1. Interacts with ZFYVE19/ANCHR; leading to retain it at midbody. In terms of tissue distribution, ubiquitously expressed.

The protein localises to the late endosome membrane. The protein resides in the midbody. It localises to the cytoplasm. It is found in the cytoskeleton. Its subcellular location is the spindle. It carries out the reaction ATP + H2O = ADP + phosphate + H(+). Involved in late steps of the endosomal multivesicular bodies (MVB) pathway. Recognizes membrane-associated ESCRT-III assemblies and catalyzes their disassembly, possibly in combination with membrane fission. Redistributes the ESCRT-III components to the cytoplasm for further rounds of MVB sorting. MVBs contain intraluminal vesicles (ILVs) that are generated by invagination and scission from the limiting membrane of the endosome and mostly are delivered to lysosomes enabling degradation of membrane proteins, such as stimulated growth factor receptors, lysosomal enzymes and lipids. It is required for proper accomplishment of various processes including the regulation of endosome size, primary cilium organization, mitotic spindle organization, chromosome segregation, and nuclear envelope sealing and spindle disassembly during anaphase. Involved in cytokinesis: retained at the midbody by ZFYVE19/ANCHR and CHMP4C until abscission checkpoint signaling is terminated at late cytokinesis. It is then released following dephosphorylation of CHMP4C, leading to abscission. VPS4A/B are required for the exosomal release of SDCBP, CD63 and syndecan. Critical for normal erythroblast cytokinesis and correct erythropoiesis. In terms of biological role, (Microbial infection) In conjunction with the ESCRT machinery also appears to function in topologically equivalent membrane fission events, such as the terminal stages of cytokinesis and enveloped virus budding (HIV-1 and other lentiviruses). In Homo sapiens (Human), this protein is Vacuolar protein sorting-associated protein 4A.